We begin with the raw amino-acid sequence, 203 residues long: Dephospho-CoA kinase (203 aa).

The 199-residue stretch at Ser3–Ala201 folds into the DPCK domain. Gly11–Thr16 is an ATP binding site.

Belongs to the CoaE family.

Its subcellular location is the cytoplasm. It carries out the reaction 3'-dephospho-CoA + ATP = ADP + CoA + H(+). The protein operates within cofactor biosynthesis; coenzyme A biosynthesis; CoA from (R)-pantothenate: step 5/5. Functionally, catalyzes the phosphorylation of the 3'-hydroxyl group of dephosphocoenzyme A to form coenzyme A. The polypeptide is Dephospho-CoA kinase (Burkholderia pseudomallei (strain 1710b)).